Consider the following 356-residue polypeptide: Histidinol-phosphate aminotransferase (356 aa).

Lys-210 is modified (N6-(pyridoxal phosphate)lysine).

Belongs to the class-II pyridoxal-phosphate-dependent aminotransferase family. Histidinol-phosphate aminotransferase subfamily. In terms of assembly, homodimer. Pyridoxal 5'-phosphate serves as cofactor.

It carries out the reaction L-histidinol phosphate + 2-oxoglutarate = 3-(imidazol-4-yl)-2-oxopropyl phosphate + L-glutamate. It functions in the pathway amino-acid biosynthesis; L-histidine biosynthesis; L-histidine from 5-phospho-alpha-D-ribose 1-diphosphate: step 7/9. In Gluconacetobacter diazotrophicus (strain ATCC 49037 / DSM 5601 / CCUG 37298 / CIP 103539 / LMG 7603 / PAl5), this protein is Histidinol-phosphate aminotransferase.